The following is a 341-amino-acid chain: Cysteine-rich repeat secretory protein 1 (341 aa).

An N-terminal signal peptide occupies residues 1–25 (MFSLPLHQSKLIFLLSFLLIKTLNA). 2 Gnk2-homologous domains span residues 28–131 (TYLL…SRKI) and 136–245 (DQGP…ATFL). 4 disulfides stabilise this stretch: cysteine 85–cysteine 94, cysteine 97–cysteine 122, cysteine 199–cysteine 208, and cysteine 211–cysteine 236. Residues 247–262 (PPPPPPPPPPPPPPPQ) show a composition bias toward pro residues. The disordered stretch occupies residues 247–274 (PPPPPPPPPPPPPPPQRLYGENDTPSSD).

It belongs to the cysteine-rich repeat secretory protein family.

Its subcellular location is the secreted. This chain is Cysteine-rich repeat secretory protein 1 (CRRSP1), found in Arabidopsis thaliana (Mouse-ear cress).